A 226-amino-acid chain; its full sequence is ATP synthase F(0) complex subunit a (226 aa).

6 helical membrane-spanning segments follow: residues 6 to 26 (FASF…IIMF), 68 to 88 (WSLM…LGLL), 97 to 117 (QLSM…ITGF), 138 to 158 (IPML…ALAV), 164 to 184 (ITAG…LTSI), and 189 to 209 (AILT…VALI).

This sequence belongs to the ATPase A chain family. Component of the ATP synthase complex composed at least of ATP5F1A/subunit alpha, ATP5F1B/subunit beta, ATP5MC1/subunit c (homooctomer), MT-ATP6/subunit a, MT-ATP8/subunit 8, ATP5ME/subunit e, ATP5MF/subunit f, ATP5MG/subunit g, ATP5MK/subunit k, ATP5MJ/subunit j, ATP5F1C/subunit gamma, ATP5F1D/subunit delta, ATP5F1E/subunit epsilon, ATP5PF/subunit F6, ATP5PB/subunit b, ATP5PD/subunit d, ATP5PO/subunit OSCP. ATP synthase complex consists of a soluble F(1) head domain (subunits alpha(3) and beta(3)) - the catalytic core - and a membrane F(0) domain - the membrane proton channel (subunits c, a, 8, e, f, g, k and j). These two domains are linked by a central stalk (subunits gamma, delta, and epsilon) rotating inside the F1 region and a stationary peripheral stalk (subunits F6, b, d, and OSCP). Interacts with DNAJC30; interaction is direct.

The protein resides in the mitochondrion inner membrane. The catalysed reaction is H(+)(in) = H(+)(out). Functionally, subunit a, of the mitochondrial membrane ATP synthase complex (F(1)F(0) ATP synthase or Complex V) that produces ATP from ADP in the presence of a proton gradient across the membrane which is generated by electron transport complexes of the respiratory chain. ATP synthase complex consist of a soluble F(1) head domain - the catalytic core - and a membrane F(1) domain - the membrane proton channel. These two domains are linked by a central stalk rotating inside the F(1) region and a stationary peripheral stalk. During catalysis, ATP synthesis in the catalytic domain of F(1) is coupled via a rotary mechanism of the central stalk subunits to proton translocation. With the subunit c (ATP5MC1), forms the proton-conducting channel in the F(0) domain, that contains two crucial half-channels (inlet and outlet) that facilitate proton movement from the mitochondrial intermembrane space (IMS) into the matrix. Protons are taken up via the inlet half-channel and released through the outlet half-channel, following a Grotthuss mechanism. This is ATP synthase F(0) complex subunit a from Ictidomys tridecemlineatus (Thirteen-lined ground squirrel).